Here is a 721-residue protein sequence, read N- to C-terminus: Long-chain-fatty-acid--CoA ligase ACSBG1 (721 aa).

Positions 1 to 64 (MPRSSEAGYC…SHGLELSAPE (64 aa)) are disordered. The span at 26 to 43 (QQGASMGTSPDNSQTSSL) shows a compositional bias: polar residues. Phosphoserine is present on residues Ser-34, Ser-50, Ser-53, and Ser-70. Residues 279-287 (TSGTTGNPK), 469-474 (AGYGLS), Asp-547, and Arg-562 each bind ATP. A Phosphotyrosine modification is found at Tyr-655. Residue Lys-698 participates in ATP binding.

The protein belongs to the ATP-dependent AMP-binding enzyme family. Bubblegum subfamily. In terms of tissue distribution, present in testis, at a lower level in brain, and at a very low level in ovary. Not detected in other tissues. tested. Present in Leydig cells of the adult testis and to a lesser degree in the seminiferous tubules in spermatogonia and Sertoli cells (at protein level).

Its subcellular location is the cytoplasm. It localises to the cytoplasmic vesicle. The protein resides in the microsome. It is found in the endoplasmic reticulum. The protein localises to the cell membrane. The catalysed reaction is a long-chain fatty acid + ATP + CoA = a long-chain fatty acyl-CoA + AMP + diphosphate. It carries out the reaction (E)-hexadec-2-enoate + ATP + CoA = (2E)-hexadecenoyl-CoA + AMP + diphosphate. It catalyses the reaction hexadecanoate + ATP + CoA = hexadecanoyl-CoA + AMP + diphosphate. Catalyzes the conversion of fatty acids such as long-chain and very long-chain fatty acids to their active form acyl-CoAs for both synthesis of cellular lipids, and degradation via beta-oxidation. Can activate diverse saturated, monosaturated and polyunsaturated fatty acids. This Rattus norvegicus (Rat) protein is Long-chain-fatty-acid--CoA ligase ACSBG1.